A 947-amino-acid polypeptide reads, in one-letter code: Leucine-rich repeat-containing protein 37B (947 aa).

The signal sequence occupies residues 1–27 (MSWLRFWGPWPLLTWQLLSLLVKEAQP). The Extracellular segment spans residues 28 to 905 (LVWVKDPLQL…EVPGDDYKNK (878 aa)). 4 disordered regions span residues 42 to 88 (LGPP…ALPQ), 226 to 257 (YLSMDTLYPGSLPPELRVNADEPPGPPEQVGL), 294 to 458 (EVEP…PEPT), and 484 to 514 (SLTEVTGPPTKLESSQDSLVQSETAPEEQKA). Polar residues predominate over residues 311 to 320 (SMESLAQTPL). Asparagine 358 is a glycosylation site (N-linked (GlcNAc...) asparagine). Composition is skewed to polar residues over residues 404–415 (GQAQHSHLTEAT), 436–445 (SPTTEETSAQ), and 495–507 (LESSQDSLVQSET). LRR repeat units lie at residues 556–577 (IFTTLNFQGNYISYLDGNVWKA), 580–601 (WTEKLILSENYLTELPKDSFEG), 604–625 (YLQYLDLSCNKIRYIERQTFES), 628–649 (FLQYINLGCNLITKLSLGTFQA), 655–676 (FLHNLILNRNPLTTVEDPYLFE), and 679–699 (ALKYLDMGTTHITLTTLKNIL). An N-linked (GlcNAc...) asparagine glycan is attached at asparagine 789. Residues 867–897 (DTDQQKTNYINENMEQNEQKEQKSSELMKEV) adopt a coiled-coil conformation. A helical membrane pass occupies residues 906 to 926 (LIFAISVTVILIILIIIFCLI). Over 927-947 (EVNSHKRASEKYKDNPSISGA) the chain is Cytoplasmic.

The protein resides in the membrane. This Homo sapiens (Human) protein is Leucine-rich repeat-containing protein 37B (LRRC37B).